Consider the following 299-residue polypeptide: Oxygen-dependent coproporphyrinogen-III oxidase (299 aa).

Residue S92 participates in substrate binding. Mn(2+) contacts are provided by H96 and H106. Catalysis depends on H106, which acts as the Proton donor. A substrate-binding site is contributed by 108-110 (NVR). The Mn(2+) site is built by H145 and H175. The segment at 240–275 (YVEFNLVWDRGTLFGLQTGGRTESILMSMPPLVRWE) is important for dimerization. 258–260 (GGR) contributes to the substrate binding site.

This sequence belongs to the aerobic coproporphyrinogen-III oxidase family. In terms of assembly, homodimer. Mn(2+) serves as cofactor.

The protein resides in the cytoplasm. The enzyme catalyses coproporphyrinogen III + O2 + 2 H(+) = protoporphyrinogen IX + 2 CO2 + 2 H2O. It participates in porphyrin-containing compound metabolism; protoporphyrin-IX biosynthesis; protoporphyrinogen-IX from coproporphyrinogen-III (O2 route): step 1/1. In terms of biological role, involved in the heme biosynthesis. Catalyzes the aerobic oxidative decarboxylation of propionate groups of rings A and B of coproporphyrinogen-III to yield the vinyl groups in protoporphyrinogen-IX. This chain is Oxygen-dependent coproporphyrinogen-III oxidase, found in Escherichia coli O127:H6 (strain E2348/69 / EPEC).